The following is a 908-amino-acid chain: DNA (cytosine-5)-methyltransferase 3A (908 aa).

A compositionally biased stretch (low complexity) spans 1–13; it reads MPSSGPGDTSSSS. Disordered regions lie at residues 1-183 and 226-281; these read MPSS…PMPR and NQAS…PEYE. Residues 14–37 are compositionally biased toward basic and acidic residues; sequence LEREDDRKEGEEQEENRGKEERQE. Residues 44–54 show a composition bias toward basic residues; that stretch reads KVGRPGRKRKH. Over residues 69 to 80 the composition is skewed to polar residues; it reads TTKSQPMAQDSG. S102 carries the phosphoserine modification. Positions 110-124 are enriched in low complexity; that stretch reads GAPAEGEGTETPPEA. Position 120 is a phosphothreonine (T120). A Glycyl lysine isopeptide (Lys-Gly) (interchain with G-Cter in SUMO2) cross-link involves residue K158. Residue R167 is modified to Omega-N-methylarginine. Residues 195-399 are interaction with DNMT1 and DNMT3B; sequence SKRKRDEWLA…DSGKAVEVQN (205 aa). 2 positions are modified to phosphoserine: S239 and S251. Residues 242–256 show a composition bias toward polar residues; the sequence is AVQQPTDPASPTVAT. T257 bears the Phosphothreonine mark. Basic and acidic residues predominate over residues 265-275; the sequence is AGDKNATKAAD. Residues 288–346 enclose the PWWP domain; that stretch reads IGELVWGKLRGFSWWPGRIVSWWMTGRSRAAEGTRWVMWFGDGKFSVVCVEKLMPLSSF. Phosphoserine occurs at positions 386 and 389. Residues 443 to 462 are disordered; that stretch reads AYAPPPPAKKPRKSTTEKPK. An ADD domain is found at 478 to 610; that stretch reads EVRQKCRNIE…LQMFFANNHD (133 aa). Residues 489–519 form a GATA-type; atypical zinc finger; that stretch reads ICISCGSLNVTLEHPLFIGGMCQNCKNCFLE. Positions 490-582 are interaction with the PRC2/EED-EZH2 complex; the sequence is CISCGSLNVT…KEDPWNCYMC (93 aa). The segment at 530-586 adopts a PHD-type; atypical zinc-finger fold; sequence QSYCTICCGGREVLMCGNNNCCRCFCVECVDLLVGPGAAQAAIKEDPWNCYMCGHKG. In terms of domain architecture, SAM-dependent MTase C5-type spans 630-908; sequence IRVLSLFDGI…APLKEYFACV (279 aa). Residues 637–641, E660, and 682–684 each bind S-adenosyl-L-methionine; these read DGIAT and DVR. The active site involves C706. The residue at position 706 (C706) is an S-methylcysteine; by autocatalysis. 887–889 contacts S-adenosyl-L-methionine; the sequence is RSW.

This sequence belongs to the class I-like SAM-binding methyltransferase superfamily. C5-methyltransferase family. Heterotetramer composed of 1 DNMT3A homodimer and 2 DNMT3L subunits (DNMT3L-DNMT3A-DNMT3A-DNMT3L). Interacts with DNMT1 and DNMT3B. Interacts with MPHOSPH8. Interacts with histone H3 that is not methylated at 'Lys-4' (H3K4). Binds the ZBTB18 transcriptional repressor. Interacts with SETDB1. Associates with HDAC1 through its ADD domain. Interacts with UHRF1. Interacts with the PRC2/EED-EZH2 complex. Interacts with UBC9, PIAS1 and PIAS2. Interacts with SPOCD1. Interacts with ZNF263; recruited to the SIX3 promoter along with other proteins involved in chromatin modification and transcriptional corepression where it contributes to transcriptional repression. Auto-methylated at Cys-706: auto-methylation takes place in absence of DNA substrate and inactivates the DNA methyltransferase activity. Inactivation by auto-methylation may be used to inactivate unused DNA methyltransferases in the cell. Post-translationally, sumoylated; sumoylation disrupts the ability to interact with histone deacetylases (HDAC1 and HDAC2) and repress transcription. In terms of tissue distribution, isoform 1 is expressed ubiquitously at low levels. Expression of isoform 2 is restricted to tissues containing cells which are undergoing active de novo methylation, including spleen, testis and thymus.

It is found in the nucleus. The protein localises to the chromosome. The protein resides in the cytoplasm. The enzyme catalyses a 2'-deoxycytidine in DNA + S-adenosyl-L-methionine = a 5-methyl-2'-deoxycytidine in DNA + S-adenosyl-L-homocysteine + H(+). It carries out the reaction L-cysteinyl-[protein] + S-adenosyl-L-methionine = S-methyl-L-cysteinyl-[protein] + S-adenosyl-L-homocysteine + H(+). Its activity is regulated as follows. Activated by binding to the regulatory factor DNMT3L. Auto-methylation at Cys-706 in absence of DNA inactivates the DNA methyltransferase activity. Required for genome-wide de novo methylation and is essential for the establishment of DNA methylation patterns during development. DNA methylation is coordinated with methylation of histones. It modifies DNA in a non-processive manner and also methylates non-CpG sites. May preferentially methylate DNA linker between 2 nucleosomal cores and is inhibited by histone H1. Plays a role in paternal and maternal imprinting. Required for methylation of most imprinted loci in germ cells. Acts as a transcriptional corepressor for ZBTB18. Recruited to trimethylated 'Lys-36' of histone H3 (H3K36me3) sites. Can actively repress transcription through the recruitment of HDAC activity. Also has weak auto-methylation activity on Cys-706 in absence of DNA. The chain is DNA (cytosine-5)-methyltransferase 3A from Mus musculus (Mouse).